The sequence spans 281 residues: MKFVGAHVSAAGGVDQAVLRAHEIKATAFALFTKNQRQWKAAPLSTESIDKFKKNCEIYGYGPAQILPHDSYLINLGHPEEEALEKSRAAFLDEMQRCEQLGIELLNFHPGSHLKKIDVDKCLQRIAESINITLDKTQNVTAVIENTAGQGTNLGYRFEHLAAIIDGVEDKSRVGVCIDTCHTFAAGYDLRTVEDCEKTFAEFDNIVGFQYLKAMHLNDAKSELASRVDRHHSLGQGNIGKVPFTYIMQDIRFDGIPLILETINPDIWPEEIAWLKSQQTQ.

Residues His69, His109, Glu145, Asp179, His182, His216, Asp229, His231, and Glu261 each contribute to the Zn(2+) site.

The protein belongs to the AP endonuclease 2 family. It depends on Zn(2+) as a cofactor.

The catalysed reaction is Endonucleolytic cleavage to 5'-phosphooligonucleotide end-products.. In terms of biological role, endonuclease IV plays a role in DNA repair. It cleaves phosphodiester bonds at apurinic or apyrimidinic (AP) sites, generating a 3'-hydroxyl group and a 5'-terminal sugar phosphate. This is Probable endonuclease 4 from Proteus mirabilis (strain HI4320).